The sequence spans 446 residues: C4-dicarboxylate transport protein (446 aa).

A run of 9 helical transmembrane segments spans residues 20 to 40, 56 to 76, 91 to 111, 160 to 180, 200 to 220, 233 to 253, 319 to 339, 344 to 364, and 367 to 387; these read HLYV…HFYP, LVKM…IAGM, IYFL…ANVV, GDIL…AGVG, LVHI…AFTI, FLIL…LGLV, IYMT…LSLG, LLLV…AGFI, and AATL…ILGI.

It belongs to the dicarboxylate/amino acid:cation symporter (DAACS) (TC 2.A.23) family.

The protein resides in the cell inner membrane. Its function is as follows. Responsible for the transport of dicarboxylates such as succinate, fumarate, and malate from the periplasm across the membrane. In Azorhizobium caulinodans (strain ATCC 43989 / DSM 5975 / JCM 20966 / LMG 6465 / NBRC 14845 / NCIMB 13405 / ORS 571), this protein is C4-dicarboxylate transport protein.